The chain runs to 372 residues: Ciliary neurotrophic factor receptor subunit alpha (372 aa).

A signal peptide spans M1–A22. Residues P27–H104 form the Ig-like C2-type domain. An intrachain disulfide couples C46 to C89. N-linked (GlcNAc...) asparagine glycosylation is found at N60, N70, N142, and N190. Fibronectin type-III domains follow at residues P108 to D205 and P206 to P306. The WSXWS motif signature appears at W290–S294. The segment at P301–L340 is disordered. A compositionally biased stretch (low complexity) spans T311–L326. A lipid anchor (GPI-anchor amidated serine) is attached at S342. Positions G343–I372 are cleaved as a propeptide — removed in mature form.

Belongs to the type I cytokine receptor family. Type 3 subfamily. Forms a heterotrimer with LIFR and IL6ST. Interacts with heterodimeric neurotropic cytokine composed of CLCF1/CLC and CRLF1/CLF-1. Either alone or in complex with the heterodimer CLCF1-CRLF1 interacts with SORL1; this interaction may promote internalization and lysosomal degradation. Expressed in retina, brain, spleen, lung, liver and kidney. In the retina it is highly expressed by photoreceptors, but also found in the RPE, inner nuclear layer and ganglion cells.

The protein resides in the cell membrane. Binds to CNTF. The alpha subunit provides the receptor specificity. The chain is Ciliary neurotrophic factor receptor subunit alpha (CNTFR) from Canis lupus familiaris (Dog).